Consider the following 260-residue polypeptide: Global transcriptional regulator CodY (260 aa).

The GAF domain stretch occupies residues 1–159 (MPNLLEKTRK…SSTVVGIQLL (159 aa)). The segment at residues 207 to 226 (ASVIADRIGITRSVIVNALR) is a DNA-binding region (H-T-H motif).

It belongs to the CodY family.

The protein resides in the cytoplasm. Its function is as follows. DNA-binding global transcriptional regulator which is involved in the adaptive response to starvation and acts by directly or indirectly controlling the expression of numerous genes in response to nutrient availability. During rapid exponential growth, CodY is highly active and represses genes whose products allow adaptation to nutrient depletion. In Streptococcus equi subsp. zooepidemicus (strain H70), this protein is Global transcriptional regulator CodY.